We begin with the raw amino-acid sequence, 272 residues long: Putative phosphoenolpyruvate synthase regulatory protein (272 aa).

152–159 (GVSRCGKT) is a binding site for ADP.

This sequence belongs to the pyruvate, phosphate/water dikinase regulatory protein family. PSRP subfamily.

It carries out the reaction [pyruvate, water dikinase] + ADP = [pyruvate, water dikinase]-phosphate + AMP + H(+). It catalyses the reaction [pyruvate, water dikinase]-phosphate + phosphate + H(+) = [pyruvate, water dikinase] + diphosphate. Functionally, bifunctional serine/threonine kinase and phosphorylase involved in the regulation of the phosphoenolpyruvate synthase (PEPS) by catalyzing its phosphorylation/dephosphorylation. This chain is Putative phosphoenolpyruvate synthase regulatory protein, found in Pseudomonas putida (strain GB-1).